The sequence spans 318 residues: MAVAYEGQLTGHRGWVTSLACPQTPETATKVVSTSRDKTLLSWGPNPDRHSSECSYGLPDRRLEGHSAFVSDVALSNNGNFAVSASWDHSLRLWNLQNGQCQYKFLGHTKDVLSVAFSPDNRQIVSGGRDNALRVWNVKGECMHTLSRGAHTDWVSCVRFSPSLDAPVIVSGGWDNLVKVWDLATGRLVTDLKGHTNYVTSVTVSPDGSLCASSDKDGVARLWDLTKGEALSEMAAGAPINQICFSPNRYWMCAATEKGIRIFDLENKDIIVELAPEHQGSKKIVPECVSIAWSADGSTLYSGYTDNVIRVWGVSENA.

WD repeat units lie at residues 11-44 (GHRGWVTSLACPQTPETATKVVSTSRDKTLLSWG), 65-95 (GHSAFVSDVALSNNGNFAVSASWDHSLRLWN), 107-137 (GHTKDVLSVAFSPDNRQIVSGGRDNALRVWN), 150-182 (AHTDWVSCVRFSPSLDAPVIVSGGWDNLVKVWD), 194-224 (GHTNYVTSVTVSPDGSLCASSDKDGVARLWD), 235-264 (AAGAPINQICFSPNRYWMCAATEKGIRIFD), and 282-315 (KKIVPECVSIAWSADGSTLYSGYTDNVIRVWGVS).

This sequence belongs to the WD repeat G protein beta family. Ribosomal protein RACK1 subfamily.

The chain is Small ribosomal subunit protein RACK1 from Trypanosoma brucei brucei.